A 238-amino-acid chain; its full sequence is Ribonuclease PH (238 aa).

Phosphate is bound by residues Arg86 and 124-126 (GTR).

Belongs to the RNase PH family. As to quaternary structure, homohexameric ring arranged as a trimer of dimers.

The enzyme catalyses tRNA(n+1) + phosphate = tRNA(n) + a ribonucleoside 5'-diphosphate. In terms of biological role, phosphorolytic 3'-5' exoribonuclease that plays an important role in tRNA 3'-end maturation. Removes nucleotide residues following the 3'-CCA terminus of tRNAs; can also add nucleotides to the ends of RNA molecules by using nucleoside diphosphates as substrates, but this may not be physiologically important. Probably plays a role in initiation of 16S rRNA degradation (leading to ribosome degradation) during starvation. The protein is Ribonuclease PH of Histophilus somni (strain 2336) (Haemophilus somnus).